The primary structure comprises 120 residues: Spermidine export protein MdtJ (120 aa).

4 consecutive transmembrane segments (helical) span residues 1 to 21 (MFYW…TLSM), 31 to 51 (TGFI…AFAV), 54 to 74 (IALG…ITLF), and 81 to 101 (ESLS…IVLI).

Belongs to the drug/metabolite transporter (DMT) superfamily. Small multidrug resistance (SMR) (TC 2.A.7.1) family. MdtJ subfamily. Forms a complex with MdtI.

The protein resides in the cell inner membrane. Its function is as follows. Catalyzes the excretion of spermidine. This Klebsiella pneumoniae subsp. pneumoniae (strain ATCC 700721 / MGH 78578) protein is Spermidine export protein MdtJ.